The chain runs to 479 residues: Cyclin-dependent kinase F-1 (479 aa).

A Protein kinase domain is found at 24-419 (YEVLGRAGSG…AADLLNDPYF (396 aa)). Residues 30–38 (AGSGAYADV) and Lys-53 each bind ATP. Asp-146 serves as the catalytic Proton acceptor. Phosphothreonine is present on Thr-291. A disordered region spans residues 429–479 (EGLQVPESKDEDDDSTEEWANFRGGDSDSDFDEFGSMDVTKTDKGFSIRFS). The span at 468 to 479 (TKTDKGFSIRFS) shows a compositional bias: basic and acidic residues.

This sequence belongs to the protein kinase superfamily. CMGC Ser/Thr protein kinase family. CDC2/CDKX subfamily.

It catalyses the reaction L-seryl-[protein] + ATP = O-phospho-L-seryl-[protein] + ADP + H(+). It carries out the reaction L-threonyl-[protein] + ATP = O-phospho-L-threonyl-[protein] + ADP + H(+). The catalysed reaction is [DNA-directed RNA polymerase] + ATP = phospho-[DNA-directed RNA polymerase] + ADP + H(+). In Oryza sativa subsp. japonica (Rice), this protein is Cyclin-dependent kinase F-1 (CDKF-1).